The following is a 426-amino-acid chain: MTTPYLFEDSESFARKLDAEDALRGYRDAFHFPPGPDGKPVVYLAGNSLGLQPRNAARYIQEELEDWARLGVEGHHHGRHPWLHYHELVTEHAARLVGAKPLEVVVMNTLSVNLHLMMVSFYRPTKQRFKILVEAGAFPSDQYAVASQVRFHGYDAREAVLELKPREGEETLRTEDILETIERHGHEVALVMLGSVNYLTGQAFDLAAITKAAHAKGCFVGFDLAHGAGNLRLSLHDDGPDFAVWCSYKYLNAGPGALGGVFVHERHAHTKDLPRFEGWWGHDKQTRFQMGPTFSALPGAEGWQLSNPPIFQLAALRASLELFDQAGMAALRAKSERLTGYLEFLLDRLPEGFVRITTPRDVKQRGAQLSLRFRGEPQGLLKRLGDAGIICDFRKPDIIRAAPAPLYNSFTDVYRFVKTLEGHARE.

Residues leucine 110, serine 111, 138–141 (FPSD), aspartate 223, histidine 226, and tyrosine 248 contribute to the pyridoxal 5'-phosphate site. Lysine 249 carries the post-translational modification N6-(pyridoxal phosphate)lysine. Pyridoxal 5'-phosphate contacts are provided by tryptophan 279 and asparagine 307.

It belongs to the kynureninase family. Homodimer. Pyridoxal 5'-phosphate is required as a cofactor.

The catalysed reaction is L-kynurenine + H2O = anthranilate + L-alanine + H(+). The enzyme catalyses 3-hydroxy-L-kynurenine + H2O = 3-hydroxyanthranilate + L-alanine + H(+). The protein operates within amino-acid degradation; L-kynurenine degradation; L-alanine and anthranilate from L-kynurenine: step 1/1. It participates in cofactor biosynthesis; NAD(+) biosynthesis; quinolinate from L-kynurenine: step 2/3. Catalyzes the cleavage of L-kynurenine (L-Kyn) and L-3-hydroxykynurenine (L-3OHKyn) into anthranilic acid (AA) and 3-hydroxyanthranilic acid (3-OHAA), respectively. The polypeptide is Kynureninase (Myxococcus xanthus (strain DK1622)).